Here is a 300-residue protein sequence, read N- to C-terminus: Forkhead transcription factor fkh-9 (300 aa).

Residues Arg66–Arg161 constitute a DNA-binding region (fork-head). A disordered region spans residues Lys153–Pro208. The span at Lys169–Gly183 shows a compositional bias: basic and acidic residues. Residues Ser187–Ser198 are compositionally biased toward low complexity.

As to expression, expressed in mechanosensory neurons.

The protein resides in the nucleus. Functionally, transcription factor. Binds to the regulatory elements of genes that contain the sequence motif 5'-TTGTTTCT-3'. Involved in regulating intestinal transcription of vitellogenin vit-2, acting in concert with transcription factors elt-2, mab-3 and daf-16, and also the TGF-beta/Sma/Mab pathway. Functions downstream of the insulin/IGF-1-like signaling (IIS) mediated pathway, in regeneration of axons after injury and in short-term memory, perhaps acting in neurons, and in modulation of longevity, perhaps acting non-neuronally. Plays a role in the modulation of endoplasmic reticulum (ER) homeostasis during chemical and pathogen stress, including exposure to the Gram-negative bacterium P.aeruginosa. This Caenorhabditis elegans protein is Forkhead transcription factor fkh-9.